Here is a 295-residue protein sequence, read N- to C-terminus: uncharacterized protein (295 aa).

Residues 151-290 enclose the Resolvase/invertase-type recombinase catalytic domain; that stretch reads RTAVCARLSS…RAVAAAARAG (140 aa). The active-site O-(5'-phospho-DNA)-serine intermediate is the S159.

This is an uncharacterized protein from Mycobacterium bovis (strain ATCC BAA-935 / AF2122/97).